A 124-amino-acid polypeptide reads, in one-letter code: Small ribosomal subunit protein uS10z/uS10x (124 aa).

This sequence belongs to the universal ribosomal protein uS10 family.

In Arabidopsis thaliana (Mouse-ear cress), this protein is Small ribosomal subunit protein uS10z/uS10x (RPS20A).